Consider the following 379-residue polypeptide: Queuine tRNA-ribosyltransferase (379 aa).

Asp-91 acts as the Proton acceptor in catalysis. Substrate contacts are provided by residues 91–95 (DSGGF), Asp-145, Gln-189, and Gly-216. Positions 247-253 (GVGKPED) are RNA binding. Asp-266 functions as the Nucleophile in the catalytic mechanism. The RNA binding; important for wobble base 34 recognition stretch occupies residues 271–275 (TRNAR). 4 residues coordinate Zn(2+): Cys-304, Cys-306, Cys-309, and His-335.

This sequence belongs to the queuine tRNA-ribosyltransferase family. As to quaternary structure, homodimer. Within each dimer, one monomer is responsible for RNA recognition and catalysis, while the other monomer binds to the replacement base PreQ1. Requires Zn(2+) as cofactor.

It carries out the reaction 7-aminomethyl-7-carbaguanine + guanosine(34) in tRNA = 7-aminomethyl-7-carbaguanosine(34) in tRNA + guanine. It functions in the pathway tRNA modification; tRNA-queuosine biosynthesis. Catalyzes the base-exchange of a guanine (G) residue with the queuine precursor 7-aminomethyl-7-deazaguanine (PreQ1) at position 34 (anticodon wobble position) in tRNAs with GU(N) anticodons (tRNA-Asp, -Asn, -His and -Tyr). Catalysis occurs through a double-displacement mechanism. The nucleophile active site attacks the C1' of nucleotide 34 to detach the guanine base from the RNA, forming a covalent enzyme-RNA intermediate. The proton acceptor active site deprotonates the incoming PreQ1, allowing a nucleophilic attack on the C1' of the ribose to form the product. After dissociation, two additional enzymatic reactions on the tRNA convert PreQ1 to queuine (Q), resulting in the hypermodified nucleoside queuosine (7-(((4,5-cis-dihydroxy-2-cyclopenten-1-yl)amino)methyl)-7-deazaguanosine). This chain is Queuine tRNA-ribosyltransferase, found in Vibrio cholerae serotype O1 (strain ATCC 39315 / El Tor Inaba N16961).